Consider the following 617-residue polypeptide: MPSNTSRSVPTGFYYKQNARMQNRPRFSDRKHSSKSKHRFPVDPSLQPDEADEGTRLLGNSDSDLLEPPSEHSSNGEDDKDINNPPSMPSSVCSSPKSPHRHYESDEDIENISLPESHPEDIQRKEFETENGKNTRDQPSPLAEVSDFAISSPHVYPKSANSHDSHYEQFANNDVTESAVDDHPATRKLSRDELYLPISPNNAQEPKFSVLDEWTKKMVANFEEYSVEDVDKRRERNRKLSEPLLVNGRYRVRDRWAQFRKSEIEKPYRFTFFTDELPSTIHSHEMWELVHDGQSFEDLFHSGGTWWLDVSCPKEEEIRVLAKAFGIHPLTVEDITLEEDREKVELFRTYYFVTFRSFNQLPSNSEYLKPLNFYLVVFRDGIITFHMNPTPHPANVRRRIRQLNGYLTVNADWIAYALLDDTTDAFAPFIEQIEDEVDTIDSMILSIHYDHVMEVKPQERMLQRVGECRKLIMSLLRLLANKADVVRGLSKRCNESWQVAPRGEIALYLGDVQDHIVTMVQNLNHYEKILSRSHSNYLAQISINMTLVSNETNEVLSRLTILGTILIPLNLVTGLWGMNVKVPGQDVPGLGWFFSILGSLMIFAISSFILCKWYKVI.

The tract at residues 1-141 (MPSNTSRSVP…GKNTRDQPSP (141 aa)) is disordered. Residue S105 is modified to Phosphoserine. Basic and acidic residues predominate over residues 117–136 (SHPEDIQRKEFETENGKNTR). S152, S162, S226, and S241 each carry phosphoserine. The next 2 membrane-spanning stretches (helical) occupy residues 560–580 (TILGTILIPLNLVTGLWGMNV) and 590–610 (LGWFFSILGSLMIFAISSFIL).

It belongs to the CorA metal ion transporter (MIT) (TC 1.A.35) family. As to quaternary structure, interacts with sad1.

The protein localises to the membrane. This Schizosaccharomyces pombe (strain 972 / ATCC 24843) (Fission yeast) protein is Putative metal ion transporter C17A12.14.